Here is a 151-residue protein sequence, read N- to C-terminus: Probable ubiquitin-conjugating enzyme E2 W-B (151 aa).

A UBC core domain is found at 3–151 (SMQKRLQKEL…TKWWYHDDTC (149 aa)). Catalysis depends on cysteine 91, which acts as the Glycyl thioester intermediate.

Belongs to the ubiquitin-conjugating enzyme family.

The protein resides in the nucleus. It catalyses the reaction S-ubiquitinyl-[E1 ubiquitin-activating enzyme]-L-cysteine + [E2 ubiquitin-conjugating enzyme]-L-cysteine = [E1 ubiquitin-activating enzyme]-L-cysteine + S-ubiquitinyl-[E2 ubiquitin-conjugating enzyme]-L-cysteine.. The catalysed reaction is S-ubiquitinyl-[E1 ubiquitin-activating enzyme]-L-cysteine + [acceptor protein]-N-terminal-amino acid = [E1 ubiquitin-activating enzyme]-L-cysteine + N-terminal-ubiquitinyl-[acceptor protein].. It participates in protein modification; protein ubiquitination. In terms of biological role, accepts ubiquitin from the E1 complex and catalyzes its covalent attachment to other proteins. Catalyzes monoubiquitination. Involved in degradation of misfolded chaperone substrate and DNA repair. The protein is Probable ubiquitin-conjugating enzyme E2 W-B (ube2wb) of Danio rerio (Zebrafish).